Consider the following 321-residue polypeptide: ATP-dependent 6-phosphofructokinase (321 aa).

Glycine 12 contributes to the ATP binding site. Residues 22–26 and 55–60 each bind ADP; these read RGVVR and RYSVSD. ATP is bound by residues 73-74 and 103-106; these read RF and GDGS. Aspartate 104 is a binding site for Mg(2+). 127 to 129 is a binding site for substrate; it reads TID. The active-site Proton acceptor is the aspartate 129. Arginine 156 serves as a coordination point for ADP. Substrate-binding positions include arginine 164 and 171–173; that span reads MGR. ADP is bound by residues 187-189 and 215-217; these read GCE and KRH. Residues glutamate 224, arginine 245, and 251-254 contribute to the substrate site; that span reads HVQR.

Belongs to the phosphofructokinase type A (PFKA) family. ATP-dependent PFK group I subfamily. Prokaryotic clade 'B1' sub-subfamily. Homotetramer. The cofactor is Mg(2+).

The protein resides in the cytoplasm. It carries out the reaction beta-D-fructose 6-phosphate + ATP = beta-D-fructose 1,6-bisphosphate + ADP + H(+). The protein operates within carbohydrate degradation; glycolysis; D-glyceraldehyde 3-phosphate and glycerone phosphate from D-glucose: step 3/4. Its activity is regulated as follows. Allosterically activated by ADP and other diphosphonucleosides, and allosterically inhibited by phosphoenolpyruvate. Functionally, catalyzes the phosphorylation of D-fructose 6-phosphate to fructose 1,6-bisphosphate by ATP, the first committing step of glycolysis. The protein is ATP-dependent 6-phosphofructokinase of Mannheimia succiniciproducens (strain KCTC 0769BP / MBEL55E).